The sequence spans 1044 residues: Spindle assembly checkpoint serine/threonine-protein kinase bub1 (1044 aa).

Residues 36–204 enclose the BUB1 N-terminal domain; the sequence is FQEELDIIEE…SSPFPPPRIV (169 aa). Disordered stretches follow at residues 209 to 259, 317 to 343, 404 to 446, 484 to 555, and 685 to 705; these read PVSS…PLLY, VHHD…TPTR, ESLE…SQEE, KNSN…DSNS, and IKPK…SLDG. Polar residues predominate over residues 223 to 239; it reads QVFSDASSSRDSQNASD. A compositionally biased stretch (polar residues) spans 430 to 442; the sequence is NSSNSGATSLTGR. The segment covering 504–518 has biased composition (low complexity); sequence STLQEETATGTTSTT. Residues 544 to 555 show a composition bias toward polar residues; it reads RSPQYSTVDSNS. Position 550 is a phosphothreonine (Thr550). Residues 718–1044 enclose the Protein kinase domain; the sequence is LSVISKLGQG…LLKSIEKRKI (327 aa). 5 residues coordinate ATP: Ala728, Phe729, Ala730, Lys762, and Asp809. Asp861 functions as the Proton acceptor in the catalytic mechanism. ATP-binding residues include Asp865, Asn866, and Asp900.

This sequence belongs to the protein kinase superfamily. Ser/Thr protein kinase family. BUB1 subfamily. As to quaternary structure, part of the BUB1-BUB3 complex, composed of bub1 and bub3. Interacts with spc7 (when phosphorylated on MELT motifs); to recruit the bub1-bub3 complex to kinetochores. Interacts with mad3. Post-translationally, autophosphorylated.

Its subcellular location is the nucleus. It is found in the chromosome. It localises to the centromere. The protein resides in the kinetochore. It catalyses the reaction L-seryl-[protein] + ATP = O-phospho-L-seryl-[protein] + ADP + H(+). It carries out the reaction L-threonyl-[protein] + ATP = O-phospho-L-threonyl-[protein] + ADP + H(+). Functionally, involved in mitotic spindle assembly checkpoint signaling, a process that delays anaphase until chromosomes are bioriented on the spindle, and in the repair of incorrect mitotic kinetochore-spindle microtubule attachments. Acts as a kinetochore scaffold for the recruitment of other spindle assembly checkpoint components. The polypeptide is Spindle assembly checkpoint serine/threonine-protein kinase bub1 (Schizosaccharomyces pombe (strain 972 / ATCC 24843) (Fission yeast)).